The sequence spans 151 residues: Probable ubiquitin-conjugating enzyme E2 W-B (151 aa).

Positions 3–151 (SMQKRLQKEL…TKWWYHDDTC (149 aa)) constitute a UBC core domain. C91 functions as the Glycyl thioester intermediate in the catalytic mechanism.

Belongs to the ubiquitin-conjugating enzyme family.

The protein resides in the nucleus. The catalysed reaction is S-ubiquitinyl-[E1 ubiquitin-activating enzyme]-L-cysteine + [E2 ubiquitin-conjugating enzyme]-L-cysteine = [E1 ubiquitin-activating enzyme]-L-cysteine + S-ubiquitinyl-[E2 ubiquitin-conjugating enzyme]-L-cysteine.. The enzyme catalyses S-ubiquitinyl-[E1 ubiquitin-activating enzyme]-L-cysteine + [acceptor protein]-N-terminal-amino acid = [E1 ubiquitin-activating enzyme]-L-cysteine + N-terminal-ubiquitinyl-[acceptor protein].. It participates in protein modification; protein ubiquitination. Its function is as follows. Accepts ubiquitin from the E1 complex and catalyzes its covalent attachment to other proteins. Catalyzes monoubiquitination. Involved in degradation of misfolded chaperone substrate and DNA repair. In Danio rerio (Zebrafish), this protein is Probable ubiquitin-conjugating enzyme E2 W-B (ube2wb).